Consider the following 227-residue polypeptide: GRF-interacting factor 1 (227 aa).

Positions 124 to 139 (ALSPLQQQQQQQAAAA) are enriched in low complexity. 2 disordered regions span residues 124-160 (ALSPLQQQQQQQAAAAHGQLGMGSGGTTSGFSILHGE) and 188-227 (GGGGGGKEGSTSLSVDVRGANSGAQSGDGEYLKGTEEEGS). The span at 217 to 227 (EYLKGTEEEGS) shows a compositional bias: basic and acidic residues.

This sequence belongs to the SS18 family. In terms of assembly, interacts with GRF4. Highly expressed in internodes, nodes, developing spikelets and developing anthers. Expressed at low levels in roots and mature glumes.

It is found in the nucleus. The protein resides in the cytoplasm. Transcription coactivator that plays a role in the regulation of meristematic function in leaves, stems and inflorescences. May regulate leaf size, length of stem internodes, and seed size by promoting cell expansion. Transcription coactivator that plays a role in the regulation of grain size. Component of a network formed by the microRNA396 (miRNA396), the GRFs and their interacting factors (GIFs) acting in the regulation of meristem function, at least partially through the control of cell proliferation. Component of the miRNA396c-GRF4-GIF1 regulatory module that plays an important role in grain size determination. The polypeptide is GRF-interacting factor 1 (Oryza sativa subsp. japonica (Rice)).